The primary structure comprises 473 residues: Cysteine--tRNA ligase (473 aa).

Cys28 lines the Zn(2+) pocket. Residues 30–40 (PTVYNMPHIGN) carry the 'HIGH' region motif. Residues Cys213, His238, and Glu242 each coordinate Zn(2+). A 'KMSKS' region motif is present at residues 270–274 (KMSKS). Lys273 contributes to the ATP binding site.

It belongs to the class-I aminoacyl-tRNA synthetase family. Zn(2+) serves as cofactor.

It localises to the cytoplasm. It carries out the reaction tRNA(Cys) + L-cysteine + ATP = L-cysteinyl-tRNA(Cys) + AMP + diphosphate. This chain is Cysteine--tRNA ligase, found in Methanosarcina acetivorans (strain ATCC 35395 / DSM 2834 / JCM 12185 / C2A).